Consider the following 142-residue polypeptide: Probable signal recognition particle 19 kDa protein (142 aa).

A disordered region spans residues 115–142 (KTRQPGYTAPSVASSSAAAAGKKNKKKK). The segment covering 123–135 (APSVASSSAAAAG) has biased composition (low complexity).

It belongs to the SRP19 family. Component of a signal recognition particle complex that consists of a 7SL RNA molecule of 300 nucleotides and six protein subunits: srpa-72, srpa-68, SRP54, F37F2.2/SRP19, F25G6.8/SRP14 and ZK512.4/SRP9.

Its subcellular location is the cytoplasm. It localises to the nucleus. The protein resides in the nucleolus. Functionally, component of the signal recognition particle (SRP) complex, a ribonucleoprotein complex that mediates the cotranslational targeting of secretory and membrane proteins to the endoplasmic reticulum (ER). Binds directly to 7SL RNA. Mediates binding of SRP54 to the SRP complex. This Caenorhabditis elegans protein is Probable signal recognition particle 19 kDa protein.